The sequence spans 92 residues: Putative transmembrane protein ORF92 (92 aa).

3 helical membrane-spanning segments follow: residues 11–28, 32–52, and 54–74; these read FVKG…TYAI, FFSS…LFAS, and FLFD…IGVG.

The protein resides in the host membrane. This Acidianus convivator (ABV) protein is Putative transmembrane protein ORF92.